Here is a 389-residue protein sequence, read N- to C-terminus: Gustatory receptor for bitter taste 22e (389 aa).

Topologically, residues 1–14 (MFRPSGSGYRQKWT) are cytoplasmic. A helical membrane pass occupies residues 15-35 (GLTLKGALYGSWILGVFPFAY). At 36-46 (DSWTRTLRRSK) the chain is on the extracellular side. Residues 47 to 67 (WLIAYGFVLNAAFILLVVTND) form a helical membrane-spanning segment. The Cytoplasmic segment spans residues 68–142 (TESETPLRME…SLEECISFDR (75 aa)). A helical transmembrane segment spans residues 143–163 (FVLYKGFSVVLELVSMLVLEL). Topologically, residues 164-170 (GMSPNYS) are extracellular. An N-linked (GlcNAc...) asparagine glycan is attached at N168. The helical transmembrane segment at 171–191 (AQFFIGLGSLCLMLLAVLLGA) threads the bilayer. Residues 192-254 (SHFHLAVVFV…QRLASIYDYQ (63 aa)) are Cytoplasmic-facing. The helical transmembrane segment at 255-275 (MVMVMVSFLIANVLGIYFFII) threads the bilayer. Over 276-287 (YSISLNKSLDFK) the chain is Extracellular. An N-linked (GlcNAc...) asparagine glycan is attached at N281. The helical transmembrane segment at 288-308 (ILVFVQALVINMLDFWLNVEI) threads the bilayer. The Cytoplasmic portion of the chain corresponds to 309-366 (CELAERTGRQTSTILKLFNDIENIDEKLERSITDFALFCSHRRLRFHHCGLFYVNYEM). A helical transmembrane segment spans residues 367-387 (GFRMAITSFLYLLFLIQFDYW). The Extracellular segment spans residues 388–389 (NL).

The protein belongs to the insect chemoreceptor superfamily. Gustatory receptor (GR) family. Gr22e subfamily. As to expression, taste bristles on the labial palp, labral and cibarial sense organs, chemosensory bristles on the leg and anterior wing margin. In larvae, is expressed in neurons of the terminal external chemosensory organ and in the dorsal pharyngeal sense organ. Neurons expressing Gr22e also express Gr66a and correspond to taste neurons that mediate sensitivity to bitter compounds.

Its subcellular location is the cell membrane. In terms of biological role, gustatory receptor which mediates acceptance or avoidance behavior, depending on its substrates. Seems to be involved in the sensing of bitter taste since it is expressed in neurons that mediate sensitivity to bitter compounds which are also avoidance-type taste neurons. This is Gustatory receptor for bitter taste 22e (Gr22e) from Drosophila melanogaster (Fruit fly).